The following is a 316-amino-acid chain: Long form salivary protein D7L1 (316 aa).

Positions 1–23 (MSHTRAVVLAVACLCLILVQVEG) are cleaved as a signal peptide. Intrachain disulfides connect cysteine 40–cysteine 76, cysteine 72–cysteine 131, cysteine 181–cysteine 214, and cysteine 255–cysteine 266.

This sequence belongs to the PBP/GOBP family.

Its subcellular location is the secreted. Its function is as follows. Modulates blood feeding of female mosquitoes on vertebrate species by binding and sequestering different mediators involved in the host response, such as biogenic amines and eicosanoids. Binds serotonin, tryptamine, histamine, leukotriene C4, leukotriene D4 and leukotriene E4. Does not bind octopamine, dopamine, noradrenaline, adrenaline and prostaglandin PGF2alpha. The chain is Long form salivary protein D7L1 from Anopheles atroparvus (European mosquito).